We begin with the raw amino-acid sequence, 134 residues long: Small ribosomal subunit protein uS9 (134 aa).

The interval 109–134 (DARRTEPHKPSKSTKGPRAKRQKSYR) is disordered. The segment covering 118-134 (PSKSTKGPRAKRQKSYR) has biased composition (basic residues).

The protein belongs to the universal ribosomal protein uS9 family.

This chain is Small ribosomal subunit protein uS9, found in Methanococcus aeolicus (strain ATCC BAA-1280 / DSM 17508 / OCM 812 / Nankai-3).